The primary structure comprises 730 residues: Denticleless protein homolog (730 aa).

Met1 is subject to N-acetylmethionine. WD repeat units follow at residues 47–89, 96–135, and 138–178; these read GVPV…FRKK, AHWNAVFDLAWVPGELKLVTAAGDQTAKFWDVKAGELIGT, and GHQC…KDGF. The DDB1-binding motif signature appears at 168–171; sequence WDTR. The segment covering 188–198 has biased composition (polar residues); the sequence is AHNTSDKQTPS. Positions 188–210 are disordered; that stretch reads AHNTSDKQTPSKPKKKQNSKGLA. Thr196 carries the phosphothreonine modification. A Nuclear localization signal motif is present at residues 197-203; that stretch reads PSKPKKK. WD repeat units lie at residues 214–253, 267–308, 313–354, and 358–398; these read DFQQSVTVVLFQDENTLVSAGAVDGIIKVWDLRKNYTAYR, SSTR…TSPV, GHQN…QPPT, and GHSQ…EEKP. The DDB1-binding motif motif lies at 243–246; sequence WDLR. The segment at 399–443 is disordered; that stretch reads GGDKLSTVGWASQKKKESRPGLVTVTSSQSTPAKAPRAKCNPSNS. Phosphoserine occurs at positions 410 and 426. Residue Thr464 is modified to Phosphothreonine; by CDK1 and CDK2. The tract at residues 465–498 is disordered; the sequence is PTFSIKTSPAKARSPINRRGSVSSVSPKPPSSFK. Phosphoserine is present on residues Ser485, Ser490, Ser495, and Ser512. Thr516 carries the phosphothreonine modification. Ser557 is subject to Phosphoserine. Disordered stretches follow at residues 599 to 631 and 644 to 703; these read SKDSLGPTKSSKIEGAGTSISEPPSPISPYASE and GEGS…TITP. Ser676 and Ser679 each carry phosphoserine. Residues 679-689 are compositionally biased toward polar residues; it reads SPSSQTPNSRR. Residues Thr684 and Thr702 each carry the phosphothreonine modification. Residue Ser717 is modified to Phosphoserine.

Belongs to the WD repeat cdt2 family. Component of the DCX(DTL) E3 ubiquitin ligase complex (also called CRL4(CDT2)), at least composed of CUL4 (CUL4A or CUL4B), DDB1, DTL/CDT2 and RBX1. Interacts with CDKN1A. Interacts with DDB1. Interacts with FBXO11; SCF(FBXWO11) controls DTL stability but DCX(DTL) does not control FBXO11 stability. Interacts with CRY1. In terms of processing, ubiquitinated by the anaphase promoting complex/cyclosome (APC/C). Autoubiquitinated through 'Lys-48'-polyubiquitin chains in a PCNA-independent reaction, allowing proteasomal turnover. Polyubiquitinated by SCF(FBXO11) when not phosphorylated, leading to its degradation. A tight regulation of the polyubiquitination by SCF(FBXO11) is involved in the control of different processes such as TGF-beta signaling, cell cycle progression and exit. Post-translationally, phosphorylated at Thr-464 by CDK1/Cyclin-B and CDK2/Cyclin-A but not by CDK2/Cyclin-E, MAPK1 or PLK1. Phosphorylation at Thr-464 inhibits the interaction with FBXO11 and decreases upon cell cycle exit induced by TGF-beta or serum starvation. As to expression, expressed in placenta and testis, very low expression seen in skeletal muscle. Detected in all hematopoietic tissues examined, with highest expression in thymus and bone marrow. A low level detected in the spleen and lymph node, and barely detectable level in the peripheral leukocytes. RA treatment down-regulated the expression in NT2 cell.

Its subcellular location is the nucleus. It is found in the nucleus membrane. The protein resides in the cytoplasm. The protein localises to the cytoskeleton. It localises to the microtubule organizing center. Its subcellular location is the centrosome. It is found in the chromosome. Its pathway is protein modification; protein ubiquitination. In terms of biological role, substrate-specific adapter of a DCX (DDB1-CUL4-X-box) E3 ubiquitin-protein ligase complex required for cell cycle control, DNA damage response and translesion DNA synthesis. The DCX(DTL) complex, also named CRL4(CDT2) complex, mediates the polyubiquitination and subsequent degradation of CDT1, CDKN1A/p21(CIP1), FBH1, KMT5A and SDE2. CDT1 degradation in response to DNA damage is necessary to ensure proper cell cycle regulation of DNA replication. CDKN1A/p21(CIP1) degradation during S phase or following UV irradiation is essential to control replication licensing. KMT5A degradation is also important for a proper regulation of mechanisms such as TGF-beta signaling, cell cycle progression, DNA repair and cell migration. Most substrates require their interaction with PCNA for their polyubiquitination: substrates interact with PCNA via their PIP-box, and those containing the 'K+4' motif in the PIP box, recruit the DCX(DTL) complex, leading to their degradation. In undamaged proliferating cells, the DCX(DTL) complex also promotes the 'Lys-164' monoubiquitination of PCNA, thereby being involved in PCNA-dependent translesion DNA synthesis. The DDB1-CUL4A-DTL E3 ligase complex regulates the circadian clock function by mediating the ubiquitination and degradation of CRY1. The chain is Denticleless protein homolog (DTL) from Homo sapiens (Human).